Consider the following 64-residue polypeptide: Kappa-lycotoxin-Os1a (64 aa).

Intrachain disulfides connect cysteine 10-cysteine 26, cysteine 17-cysteine 56, cysteine 19-cysteine 42, and cysteine 28-cysteine 40.

It belongs to the neurotoxin 04 (omega-agtx) family. 01 (type I omega-agtx) subfamily. In terms of tissue distribution, expressed by the venom gland.

The protein localises to the secreted. Its function is as follows. Insecticidal to house crickets. It induces an excitatory slow-onset impact that leads to irreversible spastic paralysis. It also modifies human voltage-gated potassium channel Kv1.5/KCNA5. Most likely, it binds to the voltage-sensing domain of the channel, suggesting it does not block the pore but prevents its opening at physiological membrane potentials. The recombinant peptide binds to the channel in an irreversible manner and slows down the hKv1.5 current activation kinetics. It is not toxic to mice, when intracranially injected (at 0.5 ug/g mouse). This is Kappa-lycotoxin-Os1a from Oculicosa supermirabilis (Central Asian wolf-spider).